We begin with the raw amino-acid sequence, 294 residues long: Foldase protein PrsA 1 (294 aa).

The first 21 residues, 1-21 (MTKLKKVMISVIAATLLLLAG), serve as a signal peptide directing secretion. Cysteine 22 is lipidated: N-palmitoyl cysteine. Cysteine 22 carries S-diacylglycerol cysteine lipidation. The PpiC domain maps to 135–226 (EPDITVRHIL…YGYHLIQLVK (92 aa)).

This sequence belongs to the PrsA family.

Its subcellular location is the cell membrane. It carries out the reaction [protein]-peptidylproline (omega=180) = [protein]-peptidylproline (omega=0). In terms of biological role, plays a major role in protein secretion by helping the post-translocational extracellular folding of several secreted proteins. The sequence is that of Foldase protein PrsA 1 from Listeria monocytogenes serotype 4b (strain F2365).